A 350-amino-acid polypeptide reads, in one-letter code: Protein-glutamate methylesterase/protein-glutamine glutaminase (350 aa).

The Response regulatory domain maps to 5-122 (KVLCVDDSAL…RDGLIEYSEV (118 aa)). Asp-56 carries the post-translational modification 4-aspartylphosphate. In terms of domain architecture, CheB-type methylesterase spans 152–346 (PFASSEKLVI…ERILTRLGDR (195 aa)). Catalysis depends on residues Ser-165, His-191, and Asp-288.

The protein belongs to the CheB family. In terms of processing, phosphorylated by CheA. Phosphorylation of the N-terminal regulatory domain activates the methylesterase activity.

Its subcellular location is the cytoplasm. It carries out the reaction [protein]-L-glutamate 5-O-methyl ester + H2O = L-glutamyl-[protein] + methanol + H(+). The enzyme catalyses L-glutaminyl-[protein] + H2O = L-glutamyl-[protein] + NH4(+). Functionally, involved in chemotaxis. Part of a chemotaxis signal transduction system that modulates chemotaxis in response to various stimuli. Catalyzes the demethylation of specific methylglutamate residues introduced into the chemoreceptors (methyl-accepting chemotaxis proteins or MCP) by CheR. Also mediates the irreversible deamidation of specific glutamine residues to glutamic acid. In Bordetella pertussis (strain Tohama I / ATCC BAA-589 / NCTC 13251), this protein is Protein-glutamate methylesterase/protein-glutamine glutaminase.